We begin with the raw amino-acid sequence, 1330 residues long: ESX-3 secretion system protein EccC3 (1330 aa).

The next 2 helical transmembrane spans lie at 43–63 (LPYL…ATGM) and 65–85 (VISP…TALY). FtsK domains follow at residues 456-662 (GEPL…SVSR), 811-1000 (RDPL…RDSN), and 1090-1280 (LAPV…ADSG). Residues 479-486 (GMTGSGKS), 829-836 (GGPKSGKS), and 1107-1114 (GDARSGKT) each bind ATP.

In terms of assembly, part of the ESX-3 / type VII secretion system (T7SS), which is composed of cytosolic and membrane components. The ESX-3 membrane complex is composed of EccB3, EccC3, EccD3 and EccE3.

The protein resides in the cell inner membrane. Its function is as follows. Part of the ESX-3 specialized secretion system, which is important for iron and zinc uptake or homeostasis. This Mycobacterium tuberculosis (strain CDC 1551 / Oshkosh) protein is ESX-3 secretion system protein EccC3.